We begin with the raw amino-acid sequence, 304 residues long: Aspartate carbamoyltransferase catalytic subunit (304 aa).

Carbamoyl phosphate is bound by residues Arg-49 and Thr-50. Lys-77 serves as a coordination point for L-aspartate. Carbamoyl phosphate-binding residues include Arg-99, His-127, and Gln-130. Residues Arg-160 and Arg-211 each contribute to the L-aspartate site. 2 residues coordinate carbamoyl phosphate: Ala-250 and Pro-251.

The protein belongs to the aspartate/ornithine carbamoyltransferase superfamily. ATCase family. As to quaternary structure, heterododecamer (2C3:3R2) of six catalytic PyrB chains organized as two trimers (C3), and six regulatory PyrI chains organized as three dimers (R2).

It catalyses the reaction carbamoyl phosphate + L-aspartate = N-carbamoyl-L-aspartate + phosphate + H(+). It participates in pyrimidine metabolism; UMP biosynthesis via de novo pathway; (S)-dihydroorotate from bicarbonate: step 2/3. Catalyzes the condensation of carbamoyl phosphate and aspartate to form carbamoyl aspartate and inorganic phosphate, the committed step in the de novo pyrimidine nucleotide biosynthesis pathway. In Bacillus velezensis (strain DSM 23117 / BGSC 10A6 / LMG 26770 / FZB42) (Bacillus amyloliquefaciens subsp. plantarum), this protein is Aspartate carbamoyltransferase catalytic subunit.